The chain runs to 398 residues: Elongation factor Tu (398 aa).

Residues 10-207 enclose the tr-type G domain; sequence KPHVNIGTIG…TVDEYIPEPE (198 aa). Residues 19 to 26 form a G1 region; sequence GHVDHGKT. A GTP-binding site is contributed by 19–26; that stretch reads GHVDHGKT. Thr-26 contributes to the Mg(2+) binding site. A G2 region spans residues 63-67; it reads GITIN. Positions 84–87 are G3; it reads DAPG. Residues 84-88 and 139-142 each bind GTP; these read DAPGH and NKVD. The segment at 139–142 is G4; sequence NKVD. Positions 177 to 179 are G5; sequence SAL.

Belongs to the TRAFAC class translation factor GTPase superfamily. Classic translation factor GTPase family. EF-Tu/EF-1A subfamily. Monomer.

It localises to the cytoplasm. It catalyses the reaction GTP + H2O = GDP + phosphate + H(+). Functionally, GTP hydrolase that promotes the GTP-dependent binding of aminoacyl-tRNA to the A-site of ribosomes during protein biosynthesis. This is Elongation factor Tu from Streptococcus suis (strain 98HAH33).